A 365-amino-acid polypeptide reads, in one-letter code: MKKWIVMASLLLAALPAMSAQRLKDIANIGGVRPNQLIGYGLVVGLDGSGDKVTSSPFTGQAMINMLNQLGVQVPPGTKIDPKNVAAVTLTATLPPFSKRGQMLDVTASSIGDAKSLRGGTLLLSPLKGADGQIYAMAQGNVVVGGAGASAGGSSTQINQLSVGRIPSGATVEREVQTALGDGEFIHLELQESDFTTANRAVQAINKVFGGDTARAVDGRLIEVRAPFDSNQRVQFLSRMENIAVDPADLSPLVIINARTGSIVMNQAVTLGSCAVSHGNLSVTVNNTPQVSQPNPLSGGKTVVTNQADITINSTSGKVVGLKGGANLSQVVNALNALGATPQDLISILQAMKSAGSLKADLQII.

The signal sequence occupies residues 1–19 (MKKWIVMASLLLAALPAMS).

Belongs to the FlgI family. The basal body constitutes a major portion of the flagellar organelle and consists of four rings (L,P,S, and M) mounted on a central rod.

The protein localises to the periplasm. Its subcellular location is the bacterial flagellum basal body. In terms of biological role, assembles around the rod to form the L-ring and probably protects the motor/basal body from shearing forces during rotation. The protein is Flagellar P-ring protein 2 of Chromobacterium violaceum (strain ATCC 12472 / DSM 30191 / JCM 1249 / CCUG 213 / NBRC 12614 / NCIMB 9131 / NCTC 9757 / MK).